The sequence spans 322 residues: Porphobilinogen deaminase (322 aa).

An S-(dipyrrolylmethanemethyl)cysteine modification is found at cysteine 252.

This sequence belongs to the HMBS family. As to quaternary structure, monomer. The cofactor is dipyrromethane.

It catalyses the reaction 4 porphobilinogen + H2O = hydroxymethylbilane + 4 NH4(+). The protein operates within porphyrin-containing compound metabolism; protoporphyrin-IX biosynthesis; coproporphyrinogen-III from 5-aminolevulinate: step 2/4. Tetrapolymerization of the monopyrrole PBG into the hydroxymethylbilane pre-uroporphyrinogen in several discrete steps. In Caulobacter vibrioides (strain ATCC 19089 / CIP 103742 / CB 15) (Caulobacter crescentus), this protein is Porphobilinogen deaminase.